Reading from the N-terminus, the 473-residue chain is Ribosomal RNA small subunit methyltransferase F (473 aa).

S-adenosyl-L-methionine is bound by residues 124–130, glutamate 148, aspartate 175, and aspartate 193; that span reads ASAPGSK. The active-site Nucleophile is the cysteine 246.

The protein belongs to the class I-like SAM-binding methyltransferase superfamily. RsmB/NOP family.

It is found in the cytoplasm. It catalyses the reaction cytidine(1407) in 16S rRNA + S-adenosyl-L-methionine = 5-methylcytidine(1407) in 16S rRNA + S-adenosyl-L-homocysteine + H(+). Specifically methylates the cytosine at position 1407 (m5C1407) of 16S rRNA. In Aliivibrio fischeri (strain MJ11) (Vibrio fischeri), this protein is Ribosomal RNA small subunit methyltransferase F.